We begin with the raw amino-acid sequence, 409 residues long: UPF0261 protein Spro_4740 (409 aa).

It belongs to the UPF0261 family.

The chain is UPF0261 protein Spro_4740 from Serratia proteamaculans (strain 568).